Reading from the N-terminus, the 402-residue chain is Phosphopentomutase (402 aa).

6 residues coordinate Mn(2+): Asp10, Asp301, His306, Asp342, His343, and His354.

It belongs to the phosphopentomutase family. Mn(2+) serves as cofactor.

It localises to the cytoplasm. The enzyme catalyses 2-deoxy-alpha-D-ribose 1-phosphate = 2-deoxy-D-ribose 5-phosphate. It carries out the reaction alpha-D-ribose 1-phosphate = D-ribose 5-phosphate. It functions in the pathway carbohydrate degradation; 2-deoxy-D-ribose 1-phosphate degradation; D-glyceraldehyde 3-phosphate and acetaldehyde from 2-deoxy-alpha-D-ribose 1-phosphate: step 1/2. In terms of biological role, isomerase that catalyzes the conversion of deoxy-ribose 1-phosphate (dRib-1-P) and ribose 1-phosphate (Rib-1-P) to deoxy-ribose 5-phosphate (dRib-5-P) and ribose 5-phosphate (Rib-5-P), respectively. This Aeromonas salmonicida (strain A449) protein is Phosphopentomutase.